The chain runs to 663 residues: Leishmanolysin-like peptidase (663 aa).

His-246 serves as a coordination point for Zn(2+). The active site involves Glu-247. Zn(2+)-binding residues include His-250 and His-353.

This sequence belongs to the peptidase M8 family. Zn(2+) serves as cofactor.

Its subcellular location is the cytoplasm. Its function is as follows. Metalloprotease. In Caenorhabditis briggsae, this protein is Leishmanolysin-like peptidase.